We begin with the raw amino-acid sequence, 238 residues long: Probable transcriptional regulatory protein VS_II1504 (238 aa).

Belongs to the TACO1 family.

Its subcellular location is the cytoplasm. The polypeptide is Probable transcriptional regulatory protein VS_II1504 (Vibrio atlanticus (strain LGP32) (Vibrio splendidus (strain Mel32))).